The primary structure comprises 241 residues: MNIVKNELLYEGKAKKIYKTDDENTLYVVYKDSATAFNGEKKAEISGKGRLNNEISSLIFKHLHAKGINNHFIERISETEQLIKKVTIVPLEVVVRNVVAGSMSKRLGIPEGTELEQPIIEFYYKDDALGDPLITEDHIWLLKAATPEQVETIKSITTIVNEELQSIFDDCHVRLIDFKLEFGLDAEGQVLLADEISPDTCRLWDKETNEKLDKDLFRRNLGSLTDAYEEIFNRLGGIHHV.

Belongs to the SAICAR synthetase family.

The catalysed reaction is 5-amino-1-(5-phospho-D-ribosyl)imidazole-4-carboxylate + L-aspartate + ATP = (2S)-2-[5-amino-1-(5-phospho-beta-D-ribosyl)imidazole-4-carboxamido]succinate + ADP + phosphate + 2 H(+). It participates in purine metabolism; IMP biosynthesis via de novo pathway; 5-amino-1-(5-phospho-D-ribosyl)imidazole-4-carboxamide from 5-amino-1-(5-phospho-D-ribosyl)imidazole-4-carboxylate: step 1/2. This Bacillus subtilis (strain 168) protein is Phosphoribosylaminoimidazole-succinocarboxamide synthase (purC).